The primary structure comprises 419 residues: Serine hydroxymethyltransferase (419 aa).

(6S)-5,6,7,8-tetrahydrofolate is bound by residues leucine 121 and 125–127; that span reads GHL. Lysine 229 is modified (N6-(pyridoxal phosphate)lysine).

Belongs to the SHMT family. As to quaternary structure, homodimer. Pyridoxal 5'-phosphate serves as cofactor.

Its subcellular location is the cytoplasm. The catalysed reaction is (6R)-5,10-methylene-5,6,7,8-tetrahydrofolate + glycine + H2O = (6S)-5,6,7,8-tetrahydrofolate + L-serine. It functions in the pathway one-carbon metabolism; tetrahydrofolate interconversion. It participates in amino-acid biosynthesis; glycine biosynthesis; glycine from L-serine: step 1/1. In terms of biological role, catalyzes the reversible interconversion of serine and glycine with tetrahydrofolate (THF) serving as the one-carbon carrier. This reaction serves as the major source of one-carbon groups required for the biosynthesis of purines, thymidylate, methionine, and other important biomolecules. Also exhibits THF-independent aldolase activity toward beta-hydroxyamino acids, producing glycine and aldehydes, via a retro-aldol mechanism. In Histophilus somni (strain 2336) (Haemophilus somnus), this protein is Serine hydroxymethyltransferase.